The primary structure comprises 267 residues: Tryptophan synthase alpha chain (267 aa).

Catalysis depends on proton acceptor residues E49 and D60.

Belongs to the TrpA family. As to quaternary structure, tetramer of two alpha and two beta chains.

It catalyses the reaction (1S,2R)-1-C-(indol-3-yl)glycerol 3-phosphate + L-serine = D-glyceraldehyde 3-phosphate + L-tryptophan + H2O. It functions in the pathway amino-acid biosynthesis; L-tryptophan biosynthesis; L-tryptophan from chorismate: step 5/5. Functionally, the alpha subunit is responsible for the aldol cleavage of indoleglycerol phosphate to indole and glyceraldehyde 3-phosphate. The sequence is that of Tryptophan synthase alpha chain from Salinispora arenicola (strain CNS-205).